A 159-amino-acid chain; its full sequence is Ribosome-binding factor A (159 aa).

Basic and acidic residues-rich tracts occupy residues 118–128 (AADDEVAKARE) and 137–146 (DPYKEPRVAS). The interval 118–159 (AADDEVAKARENAQPAGDADPYKEPRVASDEDEASPDVREAD) is disordered.

This sequence belongs to the RbfA family. Monomer. Binds 30S ribosomal subunits, but not 50S ribosomal subunits or 70S ribosomes.

The protein localises to the cytoplasm. In terms of biological role, one of several proteins that assist in the late maturation steps of the functional core of the 30S ribosomal subunit. Associates with free 30S ribosomal subunits (but not with 30S subunits that are part of 70S ribosomes or polysomes). Required for efficient processing of 16S rRNA. May interact with the 5'-terminal helix region of 16S rRNA. The chain is Ribosome-binding factor A from Rhodococcus erythropolis (strain PR4 / NBRC 100887).